Consider the following 623-residue polypeptide: Glutathione import ATP-binding protein GsiA (623 aa).

ABC transporter domains are found at residues 15–269 (VENL…RALL) and 314–564 (LRVR…RKLL). ATP is bound by residues 49–56 (GESGSGKS) and 357–364 (GESGSGKS).

Belongs to the ABC transporter superfamily. Glutathione importer (TC 3.A.1.5.11) family. In terms of assembly, the complex is composed of two ATP-binding proteins (GsiA), two transmembrane proteins (GsiC and GsiD) and a solute-binding protein (GsiB).

The protein resides in the cell inner membrane. It carries out the reaction glutathione(out) + ATP + H2O = glutathione(in) + ADP + phosphate + H(+). Its function is as follows. Part of the ABC transporter complex GsiABCD involved in glutathione import. Responsible for energy coupling to the transport system. In Shigella sonnei (strain Ss046), this protein is Glutathione import ATP-binding protein GsiA.